The following is a 152-amino-acid chain: Transcriptional regulator MraZ (152 aa).

SpoVT-AbrB domains follow at residues 5 to 52 (ASAI…PIHE) and 81 to 124 (AHEV…DEQS).

Belongs to the MraZ family. As to quaternary structure, forms oligomers.

It is found in the cytoplasm. The protein resides in the nucleoid. The chain is Transcriptional regulator MraZ from Shewanella baltica (strain OS195).